Here is a 1496-residue protein sequence, read N- to C-terminus: DNA-directed RNA polymerase subunit beta' (1496 aa).

Residues C70, C72, C85, and C88 each coordinate Zn(2+). Mg(2+)-binding residues include D461, D463, and D465. Residues C908, C982, C989, and C992 each coordinate Zn(2+). Residues 1467-1496 (DKDMQVEGESEVPAIPPVAEGSAPEAPPAE) form a disordered region.

This sequence belongs to the RNA polymerase beta' chain family. The RNAP catalytic core consists of 2 alpha, 1 beta, 1 beta' and 1 omega subunit. When a sigma factor is associated with the core the holoenzyme is formed, which can initiate transcription. The cofactor is Mg(2+). Requires Zn(2+) as cofactor.

It carries out the reaction RNA(n) + a ribonucleoside 5'-triphosphate = RNA(n+1) + diphosphate. In terms of biological role, DNA-dependent RNA polymerase catalyzes the transcription of DNA into RNA using the four ribonucleoside triphosphates as substrates. The chain is DNA-directed RNA polymerase subunit beta' from Paramagnetospirillum magneticum (strain ATCC 700264 / AMB-1) (Magnetospirillum magneticum).